A 148-amino-acid chain; its full sequence is Small ribosomal subunit protein uS13 (148 aa).

The protein belongs to the universal ribosomal protein uS13 family. As to quaternary structure, part of the 30S ribosomal subunit. Forms a loose heterodimer with protein S19. Forms two bridges to the 50S subunit in the 70S ribosome.

In terms of biological role, located at the top of the head of the 30S subunit, it contacts several helices of the 16S rRNA. In the 70S ribosome it contacts the 23S rRNA (bridge B1a) and protein L5 of the 50S subunit (bridge B1b), connecting the 2 subunits; these bridges are implicated in subunit movement. This is Small ribosomal subunit protein uS13 from Pyrococcus horikoshii (strain ATCC 700860 / DSM 12428 / JCM 9974 / NBRC 100139 / OT-3).